A 175-amino-acid chain; its full sequence is Respiratory supercomplex factor 1-B, mitochondrial (175 aa).

In terms of domain architecture, HIG1 spans 3 to 94 (DQADVLADPD…TERKQRREFE (92 aa)). A run of 2 helical transmembrane segments spans residues 30–46 (PLIP…LYRA) and 66–83 (IYAQ…GMYY). Residues 83-115 (YKTERKQRREFEKKVEERKAQEKRDAWLRELEA) are a coiled coil.

It belongs to the RCF1 family. As to quaternary structure, associates with the respiratory chain complex III/complex IV supercomplex.

It localises to the mitochondrion membrane. In terms of biological role, cytochrome c oxidase subunit which plays a role in assembly of respiratory supercomplexes. This is Respiratory supercomplex factor 1-B, mitochondrial (rcf1-B) from Talaromyces marneffei (strain ATCC 18224 / CBS 334.59 / QM 7333) (Penicillium marneffei).